A 523-amino-acid chain; its full sequence is MTGGKWQDRVKSVEQRASSFQSSPLSCPYKPRLSQPWQPSSIWRLFPRQNAAIAFAQHIKQDVHIFSLEKEGSDAGQRIFLVTSYSELWHYYSTHRHSLMHCYEVILEGAVCKLYFDLEFHKASNKNLDGKMMVAKLIQYVCEKLEEVYGLHCSAKDVLDLDSSTSDKFSHHLIFMLPNAAFKDNSHVGRFIHDILHPALTNLKKSNPEAPGENRDDVEGTQAKRRKTEENDLGFLTVKNEKGQEQLFVDLGVYTKNRNFRLYKSSKLGKNAAFIVAEDNKFVPNPSKQITKDERIFLASLITNVSFTGQRILTYDMTQKSTAGSECPTLERESHSSDLLGDQKTSPFKEVDEFVLTLVCKDGIQGSIRRWNYFACEQLLVYDIEKFRWCHNVKRFHKSNNIIIVVDLKEEVWYQKCHDPECRRQNYRSSSFPLPQEVCMSHLLMEDEEDQAYLTDELGNIELAVTAPAESTSTTPSEDTEGWGDWPDDPAYLRALQEVEEEEEDEDEEVPDELLLQAVNECE.

Substrate-binding positions include Arg-78, 117-119 (DLE), and 168-172 (KFSHH). Mn(2+)-binding residues include Asp-117 and Glu-119. The segment at 203-230 (LKKSNPEAPGENRDDVEGTQAKRRKTEE) is disordered. Substrate-binding positions include 258-261 (RNFR) and Lys-267. 4 residues coordinate Zn(2+): Cys-390, His-397, Cys-417, and Cys-422. Residues 390 to 423 (CHNVKRFHKSNNIIIVVDLKEEVWYQKCHDPECR) carry the Zinc knuckle motif motif. The span at 467-477 (APAESTSTTPS) shows a compositional bias: low complexity. Positions 467-523 (APAESTSTTPSEDTEGWGDWPDDPAYLRALQEVEEEEEDEDEEVPDELLLQAVNECE) are disordered. Composition is skewed to acidic residues over residues 478 to 488 (EDTEGWGDWPD) and 498 to 512 (EVEE…EVPD).

The protein belongs to the eukaryotic-type primase small subunit family. Mn(2+) serves as cofactor.

It localises to the nucleus. The protein resides in the mitochondrion matrix. The protein localises to the chromosome. It carries out the reaction ssDNA + n NTP = ssDNA/pppN(pN)n-1 hybrid + (n-1) diphosphate.. It catalyses the reaction DNA(n) + a 2'-deoxyribonucleoside 5'-triphosphate = DNA(n+1) + diphosphate. Functionally, DNA primase and DNA polymerase required to tolerate replication-stalling lesions by bypassing them. Required to facilitate mitochondrial and nuclear replication fork progression by initiating de novo DNA synthesis using dNTPs and acting as an error-prone DNA polymerase able to bypass certain DNA lesions. Shows a high capacity to tolerate DNA damage lesions such as 8oxoG and abasic sites in DNA. Provides different translesion synthesis alternatives when DNA replication is stalled: able to synthesize DNA primers downstream of lesions, such as UV lesions, R-loops and G-quadruplexes, to allow DNA replication to continue. Can also realign primers ahead of 'unreadable lesions' such as abasic sites and 6-4 photoproduct (6-4 pyrimidine-pyrimidinone), thereby skipping the lesion. Repriming avoids fork degradation while leading to accumulation of internal ssDNA gaps behind the forks. Also able to incorporate nucleotides opposite DNA lesions such as 8oxoG, like a regular translesion synthesis DNA polymerase. Also required for reinitiating stalled forks after ultraviolet (UV) damage during nuclear DNA replication. Required for mitochondrial DNA (mtDNA) synthesis and replication, by reinitiating synthesis after UV damage or in the presence of chain-terminating nucleotides. In addition to its role in DNA damage response, also required to maintain efficient nuclear and mitochondrial DNA replication in unperturbed cells. The polypeptide is DNA-directed primase/polymerase protein (Danio rerio (Zebrafish)).